A 193-amino-acid chain; its full sequence is Large ribosomal subunit protein uL18 (193 aa).

Belongs to the universal ribosomal protein uL18 family. In terms of assembly, part of the 50S ribosomal subunit. Contacts the 5S and 23S rRNAs.

This is one of the proteins that bind and probably mediate the attachment of the 5S RNA into the large ribosomal subunit, where it forms part of the central protuberance. This chain is Large ribosomal subunit protein uL18, found in Methanococcus maripaludis (strain C5 / ATCC BAA-1333).